The primary structure comprises 530 residues: Ubiquitin carboxyl-terminal hydrolase 17-like protein 22 (530 aa).

The USP domain maps to Ala-80–Lys-375. The active-site Nucleophile is Cys-89. The active-site Proton acceptor is His-334. Basic and acidic residues-rich tracts occupy residues Ser-382–Arg-392 and Asp-398–His-412. Disordered regions lie at residues Ser-382–His-412 and Lys-476–Gln-530. The segment covering Ser-484–Thr-495 has biased composition (low complexity). Residues His-496–Leu-505 show a composition bias toward polar residues. Over residues Gly-510–Arg-524 the composition is skewed to basic residues.

Belongs to the peptidase C19 family. USP17 subfamily.

Its subcellular location is the nucleus. The protein resides in the endoplasmic reticulum. It catalyses the reaction Thiol-dependent hydrolysis of ester, thioester, amide, peptide and isopeptide bonds formed by the C-terminal Gly of ubiquitin (a 76-residue protein attached to proteins as an intracellular targeting signal).. In terms of biological role, deubiquitinating enzyme that removes conjugated ubiquitin from specific proteins to regulate different cellular processes that may include cell proliferation, progression through the cell cycle, apoptosis, cell migration, and the cellular response to viral infection. This is Ubiquitin carboxyl-terminal hydrolase 17-like protein 22 (USP17L22) from Homo sapiens (Human).